The sequence spans 350 residues: 3-dehydroquinate synthase (350 aa).

NAD(+) is bound by residues 106 to 110 (GVIGD), 130 to 131 (TS), lysine 143, and lysine 152. Positions 185, 246, and 263 each coordinate Zn(2+).

Belongs to the sugar phosphate cyclases superfamily. Dehydroquinate synthase family. The cofactor is Co(2+). Zn(2+) is required as a cofactor. Requires NAD(+) as cofactor.

The protein resides in the cytoplasm. The enzyme catalyses 7-phospho-2-dehydro-3-deoxy-D-arabino-heptonate = 3-dehydroquinate + phosphate. It participates in metabolic intermediate biosynthesis; chorismate biosynthesis; chorismate from D-erythrose 4-phosphate and phosphoenolpyruvate: step 2/7. Catalyzes the conversion of 3-deoxy-D-arabino-heptulosonate 7-phosphate (DAHP) to dehydroquinate (DHQ). The polypeptide is 3-dehydroquinate synthase (Clostridium botulinum (strain Alaska E43 / Type E3)).